The primary structure comprises 291 residues: 4-hydroxy-tetrahydrodipicolinate synthase (291 aa).

A pyruvate-binding site is contributed by Thr44. Tyr132 functions as the Proton donor/acceptor in the catalytic mechanism. The active-site Schiff-base intermediate with substrate is Lys161. Ile202 lines the pyruvate pocket.

The protein belongs to the DapA family. Homotetramer; dimer of dimers.

It localises to the cytoplasm. The enzyme catalyses L-aspartate 4-semialdehyde + pyruvate = (2S,4S)-4-hydroxy-2,3,4,5-tetrahydrodipicolinate + H2O + H(+). It functions in the pathway amino-acid biosynthesis; L-lysine biosynthesis via DAP pathway; (S)-tetrahydrodipicolinate from L-aspartate: step 3/4. Functionally, catalyzes the condensation of (S)-aspartate-beta-semialdehyde [(S)-ASA] and pyruvate to 4-hydroxy-tetrahydrodipicolinate (HTPA). The sequence is that of 4-hydroxy-tetrahydrodipicolinate synthase from Endomicrobium trichonymphae.